The chain runs to 621 residues: Probable potassium transport system protein Kup 2 (621 aa).

Helical transmembrane passes span 9-29 (MAGL…TSPL), 48-68 (IFGI…VKYV), 101-121 (IVLL…ITPA), 136-156 (SGME…LFLL), 164-184 (VGLM…ILGL), 210-230 (GFHA…AEAL), 246-266 (WFSL…ALLM), 275-295 (PFFL…ATLA), 336-356 (IYMP…VLTF), 364-384 (AAYG…FFVV), 393-413 (LPLA…FFAA), and 418-438 (VADG…LMST).

This sequence belongs to the HAK/KUP transporter (TC 2.A.72) family.

It is found in the cell inner membrane. The enzyme catalyses K(+)(in) + H(+)(in) = K(+)(out) + H(+)(out). Functionally, transport of potassium into the cell. Likely operates as a K(+):H(+) symporter. This chain is Probable potassium transport system protein Kup 2, found in Chromobacterium violaceum (strain ATCC 12472 / DSM 30191 / JCM 1249 / CCUG 213 / NBRC 12614 / NCIMB 9131 / NCTC 9757 / MK).